The sequence spans 100 residues: MSFKKITEMMRQAERQSKQKALDFEQKLFEYSYKNAAIKIIIFGNLTIKSITIDPALIDPEDKVTLEEMITEAVNEAVGDVKAKYDQLMEEAMPQMPGLF.

This is an uncharacterized protein from Mycoplasma pneumoniae (strain ATCC 29342 / M129 / Subtype 1) (Mycoplasmoides pneumoniae).